Here is a 50-residue protein sequence, read N- to C-terminus: Temporin-SHb (50 aa).

The N-terminal stretch at 1-10 (FLGTINLSLC) is a signal peptide. The propeptide occupies 11–35 (EQERDADEEERRDEPDESDVEVEKR). The disordered stretch occupies residues 12-31 (QERDADEEERRDEPDESDVE). The span at 14–30 (RDADEEERRDEPDESDV) shows a compositional bias: acidic residues. A Leucine amide modification is found at leucine 48.

This sequence belongs to the frog skin active peptide (FSAP) family. Temporin subfamily. As to expression, expressed by the skin glands.

The protein resides in the secreted. In terms of biological role, amphipathic alpha-helical peptide with no antimicrobial activity. Does not display anti-leishmania activity. Does not show hemolytic activity (LC(50)&gt;116 uM). The polypeptide is Temporin-SHb (Pelophylax saharicus (Sahara frog)).